A 176-amino-acid chain; its full sequence is MDLSEPIHDFLLVFLGSGLILGGLGVVLLPNPIYSAFSLGLVLVCTSLFYILSNSYFVAAAQLLIYVGAINVLIIFAVMFMNGSEYYKDFHLWTVGDGITSMVCISLFISLITTISDTSWYGIIWTTRSNQIIEQDFLSNSQQIGIHLSTDFFLPFELISIILLDALIGAIAVARQ.

Helical transmembrane passes span 10-30 (FLLVFLGSGLILGGLGVVLLP), 32-52 (PIYSAFSLGLVLVCTSLFYIL), 61-81 (AQLLIYVGAINVLIIFAVMFM), 92-112 (LWTVGDGITSMVCISLFISLI), and 152-172 (FFLPFELISIILLDALIGAIA).

This sequence belongs to the complex I subunit 6 family. In terms of assembly, NDH is composed of at least 16 different subunits, 5 of which are encoded in the nucleus.

The protein resides in the plastid. The protein localises to the chloroplast thylakoid membrane. It carries out the reaction a plastoquinone + NADH + (n+1) H(+)(in) = a plastoquinol + NAD(+) + n H(+)(out). The catalysed reaction is a plastoquinone + NADPH + (n+1) H(+)(in) = a plastoquinol + NADP(+) + n H(+)(out). Its function is as follows. NDH shuttles electrons from NAD(P)H:plastoquinone, via FMN and iron-sulfur (Fe-S) centers, to quinones in the photosynthetic chain and possibly in a chloroplast respiratory chain. The immediate electron acceptor for the enzyme in this species is believed to be plastoquinone. Couples the redox reaction to proton translocation, and thus conserves the redox energy in a proton gradient. The polypeptide is NAD(P)H-quinone oxidoreductase subunit 6, chloroplastic (ndhG) (Atropa belladonna (Belladonna)).